Consider the following 303-residue polypeptide: Aspartate carbamoyltransferase catalytic subunit (303 aa).

Carbamoyl phosphate is bound by residues R48 and T49. Residue K76 coordinates L-aspartate. Residues R98, H129, and Q132 each contribute to the carbamoyl phosphate site. L-aspartate is bound by residues R162 and R214. The carbamoyl phosphate site is built by A257 and P258.

It belongs to the aspartate/ornithine carbamoyltransferase superfamily. ATCase family. As to quaternary structure, heterododecamer (2C3:3R2) of six catalytic PyrB chains organized as two trimers (C3), and six regulatory PyrI chains organized as three dimers (R2).

It catalyses the reaction carbamoyl phosphate + L-aspartate = N-carbamoyl-L-aspartate + phosphate + H(+). It functions in the pathway pyrimidine metabolism; UMP biosynthesis via de novo pathway; (S)-dihydroorotate from bicarbonate: step 2/3. Catalyzes the condensation of carbamoyl phosphate and aspartate to form carbamoyl aspartate and inorganic phosphate, the committed step in the de novo pyrimidine nucleotide biosynthesis pathway. This Leuconostoc citreum (strain KM20) protein is Aspartate carbamoyltransferase catalytic subunit.